A 539-amino-acid polypeptide reads, in one-letter code: Laccase-1 (539 aa).

Residues 1 to 21 (MAFTAISLFLAALGVINTAFA) form the signal peptide. 2 consecutive Plastocyanin-like domains span residues 37–154 (AEVN…YDPE) and 166–309 (ESTV…HYLG). An N-linked (GlcNAc...) asparagine glycan is attached at asparagine 78. Positions 88 and 90 each coordinate Cu cation. 2 disulfides stabilise this stretch: cysteine 109–cysteine 513 and cysteine 141–cysteine 228. Asparagine 120 carries N-linked (GlcNAc...) asparagine glycosylation. Cu cation contacts are provided by histidine 133 and histidine 135. Residues asparagine 202, asparagine 233, asparagine 240, asparagine 293, asparagine 318, asparagine 353, asparagine 385, and asparagine 405 are each glycosylated (N-linked (GlcNAc...) asparagine). Residues 374 to 495 (SPTVPVLLQI…GFAVVMAEDP (122 aa)) form the Plastocyanin-like 3 domain. Cu cation contacts are provided by histidine 421, histidine 424, and histidine 426. A glycan (N-linked (GlcNAc...) asparagine) is linked at asparagine 457. Cu cation is bound by residues histidine 476, cysteine 477, histidine 478, and histidine 482. N-linked (GlcNAc...) asparagine glycosylation is present at asparagine 532.

The protein belongs to the multicopper oxidase family. The cofactor is Cu cation.

The protein resides in the secreted. The enzyme catalyses 4 hydroquinone + O2 = 4 benzosemiquinone + 2 H2O. Inhibited by chloride ions. Inhibited by citrate. Inhibited by oxalate. Activated by acetate. Functionally, in vitro, has activity towards 2,2'-azino-bis(3-ethylbenzthiazoline-6-sulfonic acid) (ABTS), 2,6-dimethoxy-phenol, and guaiacol. Although brown rot fungi preferentially degrade hemicellulose and cellulose, the enzyme may contribute to generating small amounts of lignin breakdown products required for catalytic reactions. This Fomitopsis schrenkii (Brown rot fungus) protein is Laccase-1.